Reading from the N-terminus, the 179-residue chain is Large ribosomal subunit protein uL5 (179 aa).

The protein belongs to the universal ribosomal protein uL5 family. In terms of assembly, part of the 50S ribosomal subunit; part of the 5S rRNA/L5/L18/L25 subcomplex. Contacts the 5S rRNA and the P site tRNA. Forms a bridge to the 30S subunit in the 70S ribosome.

In terms of biological role, this is one of the proteins that bind and probably mediate the attachment of the 5S RNA into the large ribosomal subunit, where it forms part of the central protuberance. In the 70S ribosome it contacts protein S13 of the 30S subunit (bridge B1b), connecting the 2 subunits; this bridge is implicated in subunit movement. Contacts the P site tRNA; the 5S rRNA and some of its associated proteins might help stabilize positioning of ribosome-bound tRNAs. The protein is Large ribosomal subunit protein uL5 of Yersinia pestis.